A 384-amino-acid polypeptide reads, in one-letter code: Galactokinase (384 aa).

Residue 34-37 (EHTD) participates in substrate binding. 123–129 (SSGLSSS) is a binding site for ATP. Mg(2+) is bound by residues S129 and E161. The active-site Proton acceptor is D173. Y222 is a substrate binding site.

This sequence belongs to the GHMP kinase family. GalK subfamily.

It is found in the cytoplasm. It catalyses the reaction alpha-D-galactose + ATP = alpha-D-galactose 1-phosphate + ADP + H(+). It participates in carbohydrate metabolism; galactose metabolism. In terms of biological role, catalyzes the transfer of the gamma-phosphate of ATP to D-galactose to form alpha-D-galactose-1-phosphate (Gal-1-P). This is Galactokinase from Actinobacillus pleuropneumoniae serotype 5b (strain L20).